A 354-amino-acid polypeptide reads, in one-letter code: Dihydroorotate dehydrogenase (quinone) (354 aa).

FMN contacts are provided by residues 61 to 65 and A85; that span reads AGYDK. K65 serves as a coordination point for substrate. Residue 110–114 participates in substrate binding; it reads NRFGF. The FMN site is built by N139 and N170. N170 is a substrate binding site. Residue S173 is the Nucleophile of the active site. N175 lines the substrate pocket. The FMN site is built by K211 and T239. 240–241 provides a ligand contact to substrate; it reads NT. FMN contacts are provided by residues G261, G290, and 311–312; that span reads YT.

The protein belongs to the dihydroorotate dehydrogenase family. Type 2 subfamily. Monomer. The cofactor is FMN.

The protein localises to the cell membrane. It carries out the reaction (S)-dihydroorotate + a quinone = orotate + a quinol. It functions in the pathway pyrimidine metabolism; UMP biosynthesis via de novo pathway; orotate from (S)-dihydroorotate (quinone route): step 1/1. Functionally, catalyzes the conversion of dihydroorotate to orotate with quinone as electron acceptor. This chain is Dihydroorotate dehydrogenase (quinone), found in Cereibacter sphaeroides (strain ATCC 17023 / DSM 158 / JCM 6121 / CCUG 31486 / LMG 2827 / NBRC 12203 / NCIMB 8253 / ATH 2.4.1.) (Rhodobacter sphaeroides).